A 333-amino-acid chain; its full sequence is Cap-specific mRNA (nucleoside-2'-O-)-methyltransferase (333 aa).

Tyrosine 22 lines the mRNA pocket. Glutamine 39, tyrosine 66, glycine 68, glycine 72, aspartate 95, arginine 97, valine 116, and aspartate 138 together coordinate S-adenosyl-L-methionine. A binding to NPH-I region spans residues 169–249; the sequence is PVASSLKWRC…NKIVRNKVVI (81 aa). Catalysis depends on lysine 175, which acts as the For methyltransferase activity. Residues 177–180, aspartate 182, 205–207, and glutamate 233 contribute to the mRNA site; these read RCPF and SAE. The segment covering 305-320 has biased composition (basic and acidic residues); that stretch reads SHEPIQRKISSKDSMS. The tract at residues 305 to 333 is disordered; that stretch reads SHEPIQRKISSKDSMSKNRNSKRSVRGNK. Residues 323–333 show a composition bias toward basic residues; it reads RNSKRSVRGNK.

Belongs to the class I-like SAM-binding methyltransferase superfamily. Poxvirus/kinetoplastid 2'-O-MTase family. Interacts with poly(A) polymerase catalytic subunit OPG063. Interacts with OPG109 and OPG123; these interactions might help linking transcription to capping and polyadenylation.

It localises to the virion. The enzyme catalyses a 5'-end (N(7)-methyl 5'-triphosphoguanosine)-ribonucleoside in mRNA + S-adenosyl-L-methionine = a 5'-end (N(7)-methyl 5'-triphosphoguanosine)-(2'-O-methyl-ribonucleoside) in mRNA + S-adenosyl-L-homocysteine + H(+). Displays methyltransferase, positive regulation of the poly(A) polymerase and transcription elongation activities. Involved in the modification of both mRNA ends and in intermediate and late gene positive transcription elongation. At the mRNAs 5' end, methylates the ribose 2' OH group of the first transcribed nucleotide, thereby producing a 2'-O-methylpurine cap. At the 3' end, functions as a processivity factor which stimulates the activity of the viral poly(A) polymerase OPG063 that creates mRNA's poly(A) tail. In the presence of OPG102, OPG063 does not dissociate from the RNA allowing tail elongation to around 250 adenylates. This is Cap-specific mRNA (nucleoside-2'-O-)-methyltransferase (OPG102) from Cynomys gunnisoni (Gunnison's prairie dog).